The following is a 353-amino-acid chain: 3-isopropylmalate dehydrogenase (353 aa).

Residue 76–89 participates in NAD(+) binding; it reads GPKWDDPRAKVRPE. Substrate is bound by residues arginine 96, arginine 106, arginine 134, and aspartate 223. Positions 223, 247, and 251 each coordinate Mg(2+). Residue 281–293 coordinates NAD(+); sequence GSAPDIAGKGIAN.

The protein belongs to the isocitrate and isopropylmalate dehydrogenases family. LeuB type 1 subfamily. As to quaternary structure, homodimer. It depends on Mg(2+) as a cofactor. Requires Mn(2+) as cofactor.

It localises to the cytoplasm. The enzyme catalyses (2R,3S)-3-isopropylmalate + NAD(+) = 4-methyl-2-oxopentanoate + CO2 + NADH. Its pathway is amino-acid biosynthesis; L-leucine biosynthesis; L-leucine from 3-methyl-2-oxobutanoate: step 3/4. Catalyzes the oxidation of 3-carboxy-2-hydroxy-4-methylpentanoate (3-isopropylmalate) to 3-carboxy-4-methyl-2-oxopentanoate. The product decarboxylates to 4-methyl-2 oxopentanoate. This Anaeromyxobacter dehalogenans (strain 2CP-C) protein is 3-isopropylmalate dehydrogenase.